Here is a 218-residue protein sequence, read N- to C-terminus: Urease accessory protein UreG (218 aa).

22–29 (GPVGSGKT) contacts GTP.

It belongs to the SIMIBI class G3E GTPase family. UreG subfamily. In terms of assembly, homodimer. UreD, UreF and UreG form a complex that acts as a GTP-hydrolysis-dependent molecular chaperone, activating the urease apoprotein by helping to assemble the nickel containing metallocenter of UreC. The UreE protein probably delivers the nickel.

It localises to the cytoplasm. Facilitates the functional incorporation of the urease nickel metallocenter. This process requires GTP hydrolysis, probably effectuated by UreG. The chain is Urease accessory protein UreG from Polaromonas sp. (strain JS666 / ATCC BAA-500).